A 139-amino-acid chain; its full sequence is uncharacterized protein (139 aa).

This is an uncharacterized protein from Invertebrate iridescent virus 3 (IIV-3).